The sequence spans 176 residues: Tubulin polymerization-promoting protein family member 3 (176 aa).

Positions 126–152 (TDTSKYTGSHKERFDESGKGKGKGGRE) are disordered. Basic and acidic residues predominate over residues 134–152 (SHKERFDESGKGKGKGGRE).

The protein belongs to the TPPP family.

It is found in the cytoplasm. The protein resides in the cytoskeleton. In terms of biological role, regulator of microtubule dynamic that has microtubule bundling activity. In Xenopus tropicalis (Western clawed frog), this protein is Tubulin polymerization-promoting protein family member 3 (tppp3).